An 847-amino-acid chain; its full sequence is Leucine--tRNA ligase (847 aa).

Residues 41–51 (PYPSGRIHMGH) carry the 'HIGH' region motif. The 'KMSKS' region motif lies at 619-623 (KMSKS). K622 contributes to the ATP binding site.

The protein belongs to the class-I aminoacyl-tRNA synthetase family.

It localises to the cytoplasm. It carries out the reaction tRNA(Leu) + L-leucine + ATP = L-leucyl-tRNA(Leu) + AMP + diphosphate. This is Leucine--tRNA ligase from Cereibacter sphaeroides (strain ATCC 17029 / ATH 2.4.9) (Rhodobacter sphaeroides).